A 208-amino-acid chain; its full sequence is NAD(P)H-quinone oxidoreductase subunit I (208 aa).

2 4Fe-4S ferredoxin-type domains span residues 55-84 (GRIH…VDWV) and 95-124 (RNYS…MTEE). Positions 64, 67, 70, 74, 104, 107, 110, and 114 each coordinate [4Fe-4S] cluster.

Belongs to the complex I 23 kDa subunit family. NDH-1 is composed of at least 11 different subunits. It depends on [4Fe-4S] cluster as a cofactor.

The protein localises to the cellular thylakoid membrane. It catalyses the reaction a plastoquinone + NADH + (n+1) H(+)(in) = a plastoquinol + NAD(+) + n H(+)(out). The catalysed reaction is a plastoquinone + NADPH + (n+1) H(+)(in) = a plastoquinol + NADP(+) + n H(+)(out). NDH-1 shuttles electrons from an unknown electron donor, via FMN and iron-sulfur (Fe-S) centers, to quinones in the respiratory and/or the photosynthetic chain. The immediate electron acceptor for the enzyme in this species is believed to be plastoquinone. Couples the redox reaction to proton translocation, and thus conserves the redox energy in a proton gradient. This is NAD(P)H-quinone oxidoreductase subunit I from Prochlorococcus marinus subsp. pastoris (strain CCMP1986 / NIES-2087 / MED4).